The following is a 395-amino-acid chain: MKRFLLCSFALVLLYPAGIDMYLVGLPRIAADLNASEAQLHIAFSVYLAGMATAMLFAGKIADQSGRKPVAIVGALVFMTASLLCSRASEGSLFLSGRFLQGVGAGGCYVVAFAILRDTLDEHRRAKVLSLLNGITCIVPVLAPVMGHLIMLRFPWQSLFYTMSAMGIIVGLLSLFILRETRPARLAPRDLSRSSPAAESLVNRFFVSRLAITTLSVSVILTFVNASPVLLMEVMGFSRGDYAITMALTAGVSMVVSFSTPFALGLFKPRTLMLVSQGLFLTAGVTLSLAHTNTVTLFGLTLICAGFSVGFGVAMSQALGPFSLRAGVASSTLGIAQVCGSSLWIWLAAILGISAMNMLIGILIGCSIVSILLIFSVTPNRSVAEHEEIPYQSRS.

Transmembrane regions (helical) follow at residues 4–24 (FLLC…MYLV), 42–62 (IAFS…GKIA), 69–89 (PVAI…SRAS), 93–113 (LFLS…VVAF), 131–151 (LLNG…HLIM), 158–178 (SLFY…LFIL), 217–237 (VSVI…VMGF), 247–267 (ALTA…LGLF), 271–291 (TLML…SLAH), 295–315 (VTLF…GVAM), 328–350 (VASS…LAAI), and 355–377 (AMNM…IFSV).

It belongs to the major facilitator superfamily. DHA1 family. MdtL (TC 2.A.1.2.22) subfamily.

The protein resides in the cell inner membrane. The sequence is that of Multidrug resistance protein MdtL from Salmonella schwarzengrund (strain CVM19633).